We begin with the raw amino-acid sequence, 848 residues long: Dolabradiene synthase KSL4, chloroplastic (848 aa).

The transit peptide at 1–64 directs the protein to the chloroplast; it reads MASLSFASSH…SRMPRNVDTH (64 aa). Positions 148–168 are disordered; that stretch reads QRSDGSWGPDGGSGDHPSSPL. The Mg(2+) site is built by aspartate 597, aspartate 601, asparagine 742, serine 746, and glutamate 750. Residues 597–601 carry the DDXXD motif motif; the sequence is DDLFD.

This sequence belongs to the terpene synthase family. Mg(2+) is required as a cofactor.

The protein resides in the plastid. The protein localises to the chloroplast. It catalyses the reaction ent-copalyl diphosphate = dolabradiene + diphosphate. Its function is as follows. Involved in the production of antifungal dolabralexin phytoalexins in response to biotic and abiotic stresses. In response to fungal infection and in associtation with AN2, is involved in the production dolabradiene, a type of antifungal phytoalexin. Converts ent-copalyl disphosphate (ent-CPP) to dolabradiene. This is Dolabradiene synthase KSL4, chloroplastic from Zea mays (Maize).